The following is a 408-amino-acid chain: NADH-quinone oxidoreductase subunit D (408 aa).

It belongs to the complex I 49 kDa subunit family. In terms of assembly, NDH-1 is composed of 14 different subunits. Subunits NuoB, C, D, E, F, and G constitute the peripheral sector of the complex.

The protein resides in the cell inner membrane. The catalysed reaction is a quinone + NADH + 5 H(+)(in) = a quinol + NAD(+) + 4 H(+)(out). Its function is as follows. NDH-1 shuttles electrons from NADH, via FMN and iron-sulfur (Fe-S) centers, to quinones in the respiratory chain. The immediate electron acceptor for the enzyme in this species is believed to be ubiquinone. Couples the redox reaction to proton translocation (for every two electrons transferred, four hydrogen ions are translocated across the cytoplasmic membrane), and thus conserves the redox energy in a proton gradient. The polypeptide is NADH-quinone oxidoreductase subunit D (Campylobacter jejuni subsp. jejuni serotype O:23/36 (strain 81-176)).